Here is a 269-residue protein sequence, read N- to C-terminus: Fructose permease IIC component (269 aa).

Positions 1-234 (MSSLQIILLL…GALGLCLALL (234 aa)) constitute a PTS EIIC type-4 domain. 7 helical membrane-spanning segments follow: residues 2–22 (SSLQIILLLIIAAITGIASVL), 35–54 (TLVGLVLGDLKTGIILGGTL), 64–86 (VGLAMAPDTAIASVISTILVITA), 90–110 (IGEGIAVAVALAAAGQALTIF), 149–169 (VMIPTLIVALISVSAVQAFLG), 181–201 (IGGGIIVVVGYAMVINMMNIP), and 206–226 (FFYIGFLLAAFTDFNLVGFGA).

The protein resides in the cell membrane. Functionally, the phosphoenolpyruvate-dependent sugar phosphotransferase system (PTS), a major carbohydrate active -transport system, catalyzes the phosphorylation of incoming sugar substrates concomitant with their translocation across the cell membrane. This system is involved in fructose transport. The polypeptide is Fructose permease IIC component (levF) (Bacillus subtilis (strain 168)).